The sequence spans 1958 residues: Sodium channel protein type 10 subunit alpha (1958 aa).

Topologically, residues 1–125 (MEFPFGSVGT…FNLIRRTAIK (125 aa)) are cytoplasmic. Residues 27-54 (QIAAHRAAKKGRPKQRGQKDKSEKPRPQ) form a disordered region. Residues 32 to 42 (RAAKKGRPKQR) are compositionally biased toward basic residues. The segment covering 43 to 54 (GQKDKSEKPRPQ) has biased composition (basic and acidic residues). An I repeat occupies 116 to 404 (FNLIRRTAIK…VTMAYEEQSQ (289 aa)). Residues 126-149 (VSVHSWFSIFITVTILVNCVCMTR) traverse the membrane as a helical segment. Over 150–154 (TDLPE) the chain is Extracellular. A helical membrane pass occupies residues 155–174 (KLEYAFTVVYTFEALIKILA). Residues 175–187 (RGFCLNEFTYLRD) lie on the Cytoplasmic side of the membrane. A helical membrane pass occupies residues 188 to 206 (PWNWLDFSVITLAYVGAAI). Residues 207-212 (DLRGIS) lie on the Extracellular side of the membrane. The helical; Voltage-sensor transmembrane segment at 213-232 (GLRTFRVLRALKTVSVIPGL) threads the bilayer. At 233-248 (KVIVGALIHSVRKLAD) the chain is on the cytoplasmic side. The helical transmembrane segment at 249–272 (VTILTVFCLSVFALVGLQLFKGNL) threads the bilayer. The Extracellular portion of the chain corresponds to 273 to 340 (KNKCIKNGTD…PDFNYTSFDS (68 aa)). An intrachain disulfide couples Cys276 to Cys318. N-linked (GlcNAc...) asparagine glycans are attached at residues Asn279, Asn288, Asn311, and Asn334. An intramembrane region (pore-forming) is located at residues 341–365 (FAWAFLSLFRLMTQDSWERLYQQTL). At 366–372 (RASGKMY) the chain is on the extracellular side. The chain crosses the membrane as a helical span at residues 373-398 (MVFFVLVIFLGSFYLVNLILAVVTMA). Residues 399–658 (YEEQSQATIA…KWKKFKMVLF (260 aa)) lie on the Cytoplasmic side of the membrane. Phosphoserine occurs at positions 440, 443, 466, and 478. 2 disordered regions span residues 444–483 (HNGSPLAPKNANERRPRVKSRMSEGSTDDNRSLQSDPYNQ) and 539–583 (GRGA…APEG). Pro residues predominate over residues 549-560 (PRSPLPQSPNPG). Phosphoserine is present on residues Ser611 and Ser614. The stretch at 646–910 (CCPKWKKFKM…EDDGEVNNLQ (265 aa)) is one II repeat. A helical membrane pass occupies residues 659 to 683 (ELVTDPFAELTITLCIVVNTVFMAM). Residues 684–694 (EHYPMTDAFDA) are Extracellular-facing. The chain crosses the membrane as a helical span at residues 695 to 718 (MLQAGNIVFTVFFTMEMAFKIIAF). Over 719–726 (DPYYYFQK) the chain is Cytoplasmic. Residues 727-746 (KWNIFDCVIVTVSLLELSTS) traverse the membrane as a helical segment. Over 747 to 752 (KKGSLS) the chain is Extracellular. A helical; Voltage-sensor transmembrane segment spans residues 753 to 772 (VLRTFRLLRVFKLAKSWPTL). At 773–788 (NMLIKIIGNSVGALGN) the chain is on the cytoplasmic side. A helical transmembrane segment spans residues 789–809 (LTFILAIIVFIFALVGKQLLS). Residues 810-833 (ENYGCRRDGISVWNGERLRWHMCD) lie on the Extracellular side of the membrane. An intramembrane region (pore-forming) is located at residues 834 to 854 (FFHSFLVVFRILCGEWIENMW). Topologically, residues 855-863 (VCMEVSQDY) are extracellular. The cysteines at positions 856 and 865 are disulfide-linked. A helical transmembrane segment spans residues 864–889 (ICLTLFLTVMVLGNLVVLNLFIALLL). The Cytoplasmic portion of the chain corresponds to 890-1148 (NSFSADNLTA…GWQVRKTCYR (259 aa)). The interval 1006 to 1094 (DLDELEEDVE…SEGSTVDCPD (89 aa)) is disordered. A compositionally biased stretch (polar residues) spans 1017–1038 (ASQSSWQEESPKGQQELLQQVQ). One copy of the III repeat lies at 1141–1450 (QVRKTCYRIV…KKYYNAMKKL (310 aa)). A helical membrane pass occupies residues 1149–1172 (IVEHSWFESFIIFMILLSSGALAF). Over 1173-1185 (EDNYLEEKPRVKS) the chain is Extracellular. Residues 1186–1211 (VLEYTDRVFTFIFVFEMLLKWVAYGF) traverse the membrane as a helical segment. Residues 1212–1217 (KKYFTN) lie on the Cytoplasmic side of the membrane. Residues 1218 to 1239 (AWCWLDFLIVNISLTSLIAKIL) traverse the membrane as a helical segment. Residues 1240 to 1243 (EYSD) lie on the Extracellular side of the membrane. A helical; Voltage-sensor transmembrane segment spans residues 1244–1265 (VASIKALRTLRALRPLRALSRF). Residues 1266-1284 (EGMRVVVDALVGAIPSIMN) lie on the Cytoplasmic side of the membrane. The helical transmembrane segment at 1285–1312 (VLLVCLIFWLIFSIMGVNLFAGKFSRCV) threads the bilayer. The Extracellular portion of the chain corresponds to 1313–1354 (DTRSNPFSVVNSTFVTNKSDCYNQNNTGHFFWVNVKVNFDNV). Residues Asn1323, Asn1329, and Asn1337 are each glycosylated (N-linked (GlcNAc...) asparagine). The segment at residues 1355–1376 (AMGYLALLQVATFKGWMDIMYA) is an intramembrane region (pore-forming). At 1377–1392 (AVDSRDINSQPNWEES) the chain is on the extracellular side. The helical transmembrane segment at 1393 to 1419 (LYMYLYFVVFIIFGGFFTLNLFVGVII) threads the bilayer. At 1420-1472 (DNFNQQKKKLGGQDIFMTEEQKKYYNAMKKLGSKKPQKPIPRPLNKYQGFVFD) the chain is on the cytoplasmic side. Phosphoserine; by PKC is present on Ser1452. Residues 1459–1758 (IPRPLNKYQG…WEKFDPEATQ (300 aa)) form an IV repeat. Residues 1473–1496 (IVTRQAFDIIIMALICLNMITMMV) traverse the membrane as a helical segment. Residues 1497–1507 (ETDNQSEEKTK) lie on the Extracellular side of the membrane. N-linked (GlcNAc...) asparagine glycosylation occurs at Asn1500. A helical membrane pass occupies residues 1508–1531 (VLGRINQFFVAVFTGECVMKMFAL). Residues 1532-1537 (RQYYFT) are Cytoplasmic-facing. Residues 1538–1561 (NGWNVFDFIVVILSISSLLFSAIL) traverse the membrane as a helical segment. Over 1562-1573 (SSLESYFSPTLL) the chain is Extracellular. A helical; Voltage-sensor membrane pass occupies residues 1574 to 1595 (RVIRLARIGRILRLIRAAKGIR). Topologically, residues 1596-1610 (TLLFALMMSLPALFN) are cytoplasmic. The chain crosses the membrane as a helical span at residues 1611–1633 (IGLLLFLVMFIYSIFGMASFANV). Residues 1634-1647 (IDEAGIDDMFNFKT) lie on the Extracellular side of the membrane. Positions 1648 to 1670 (FGNSMLCLFQITTSAGWDGLLSP) form an intramembrane region, pore-forming. The Extracellular segment spans residues 1671-1698 (ILNTGPPYCDPNRPNSNGSKGNCGSPAV). Residue Asn1687 is glycosylated (N-linked (GlcNAc...) asparagine). Residues 1699–1723 (GILFFTTYIIISFLIVVNMYIAVIL) form a helical membrane-spanning segment. Residues 1724-1958 (ENFNVATEES…AKEGKSPGPQ (235 aa)) are Cytoplasmic-facing. One can recognise an IQ domain in the interval 1852–1881 (EDISATIIQKAYRNYMLQRSLMLSNPLHVP). The interval 1901-1958 (NDNGGLPDKSETASATSFPPSYDSVTRGLSDRANISTSSSMQNEDEVTAKEGKSPGPQ) is disordered. The segment covering 1933 to 1942 (ANISTSSSMQ) has biased composition (polar residues). The span at 1947 to 1958 (VTAKEGKSPGPQ) shows a compositional bias: basic and acidic residues.

Belongs to the sodium channel (TC 1.A.1.10) family. Nav1.8/SCN10A subfamily. The channel consists of an ion conducting pore forming alpha-subunit regulated by one or more associated auxiliary subunits SCN1B, SCN2B and SCN3B; electrophysiological properties may vary depending on the type of the associated beta subunits. Found in a number of complexes with PRX, DYNLT1 and PDZD2. Interacts with proteins such as FSTL1, PRX, DYNLT1, PDZD2, S100A10 and many others. Interacts with NEDD4 and NEDD4L. In terms of processing, ubiquitinated by NEDD4L; which promotes its endocytosis. Post-translationally, phosphorylation at Ser-1452 by PKC in a highly conserved cytoplasmic loop slows inactivation of the sodium channel and reduces peak sodium currents. Lacks the cysteine which covalently binds the conotoxin GVIIJ. This cysteine (position 815) is speculated in other sodium channel subunits alpha to be implied in covalent binding with the sodium channel subunit beta-2 or beta-4. Expressed in dorsal root ganglion and trigeminal ganglion.

It is found in the cell membrane. It catalyses the reaction Na(+)(in) = Na(+)(out). Its function is as follows. Tetrodotoxin-resistant channel that mediates the voltage-dependent sodium ion permeability of excitable membranes. Assuming opened or closed conformations in response to the voltage difference across the membrane, the protein forms a sodium-selective channel through which sodium ions may pass in accordance with their electrochemical gradient. Plays a role in neuropathic pain mechanisms. This is Sodium channel protein type 10 subunit alpha from Mus musculus (Mouse).